Consider the following 141-residue polypeptide: General odorant-binding protein 57b (141 aa).

The N-terminal stretch at 1–22 is a signal peptide; that stretch reads MFIYRLVFIAPLILLLFSLAKA. Cystine bridges form between cysteine 39–cysteine 77, cysteine 73–cysteine 120, and cysteine 111–cysteine 129.

This sequence belongs to the PBP/GOBP family.

In terms of biological role, present in the aqueous fluid surrounding olfactory sensory dendrites and are thought to aid in the capture and transport of hydrophobic odorants into and through this fluid. The polypeptide is General odorant-binding protein 57b (Drosophila melanogaster (Fruit fly)).